The chain runs to 264 residues: S-adenosylmethionine decarboxylase proenzyme (264 aa).

The active-site Schiff-base intermediate with substrate; via pyruvic acid is the serine 113. Serine 113 is subject to Pyruvic acid (Ser); by autocatalysis. Histidine 118 (proton acceptor; for processing activity) is an active-site residue. Cysteine 141 serves as the catalytic Proton donor; for catalytic activity.

It belongs to the prokaryotic AdoMetDC family. Type 2 subfamily. As to quaternary structure, heterooctamer of four alpha and four beta chains arranged as a tetramer of alpha/beta heterodimers. Pyruvate is required as a cofactor. In terms of processing, is synthesized initially as an inactive proenzyme. Formation of the active enzyme involves a self-maturation process in which the active site pyruvoyl group is generated from an internal serine residue via an autocatalytic post-translational modification. Two non-identical subunits are generated from the proenzyme in this reaction, and the pyruvate is formed at the N-terminus of the alpha chain, which is derived from the carboxyl end of the proenzyme. The post-translation cleavage follows an unusual pathway, termed non-hydrolytic serinolysis, in which the side chain hydroxyl group of the serine supplies its oxygen atom to form the C-terminus of the beta chain, while the remainder of the serine residue undergoes an oxidative deamination to produce ammonia and the pyruvoyl group blocking the N-terminus of the alpha chain.

The catalysed reaction is S-adenosyl-L-methionine + H(+) = S-adenosyl 3-(methylsulfanyl)propylamine + CO2. It participates in amine and polyamine biosynthesis; S-adenosylmethioninamine biosynthesis; S-adenosylmethioninamine from S-adenosyl-L-methionine: step 1/1. Catalyzes the decarboxylation of S-adenosylmethionine to S-adenosylmethioninamine (dcAdoMet), the propylamine donor required for the synthesis of the polyamines spermine and spermidine from the diamine putrescine. In Xanthomonas euvesicatoria pv. vesicatoria (strain 85-10) (Xanthomonas campestris pv. vesicatoria), this protein is S-adenosylmethionine decarboxylase proenzyme.